Consider the following 346-residue polypeptide: MSDEYGPPERIIDAAGTGDEAALERALRPVSLDEYVGQTGVREQLEIFIRAARGRDEPLDHTLLFGPPGLGKTTLANIIATEMGASLRQSSGPVLDRPGDLAAILTNLEPGDVLFIDEIHRLSSVVEEVLYPAMEDFRIDIVIGEGPAARSIKLDLPPFTLVGATTRAGLLTSPLRDRFGIVQRLAYYPVDELTRIVQRSAGRLGVSTEAHGAAEIARRARGTPRVANRLLRRVRDFAEVRADGRITEQVAADAMELLDVDRNGLDEQDRRLLEAVVHKFGGGPVGLDNLATAIGEERGTLEDVVEPYLIQEGYLMRTPRGRVATEHAYTLLGVPGQAAGSGDLFG.

The segment at methionine 1–tyrosine 188 is large ATPase domain (RuvB-L). ATP contacts are provided by residues leucine 27, arginine 28, glycine 69, lysine 72, threonine 73, threonine 74, glutamate 135–phenylalanine 137, arginine 178, tyrosine 188, and arginine 225. A Mg(2+)-binding site is contributed by threonine 73. The tract at residues proline 189–aspartate 259 is small ATPAse domain (RuvB-S). The tract at residues arginine 262–glycine 346 is head domain (RuvB-H). DNA-binding residues include arginine 298, arginine 317, and arginine 322.

This sequence belongs to the RuvB family. Homohexamer. Forms an RuvA(8)-RuvB(12)-Holliday junction (HJ) complex. HJ DNA is sandwiched between 2 RuvA tetramers; dsDNA enters through RuvA and exits via RuvB. An RuvB hexamer assembles on each DNA strand where it exits the tetramer. Each RuvB hexamer is contacted by two RuvA subunits (via domain III) on 2 adjacent RuvB subunits; this complex drives branch migration. In the full resolvosome a probable DNA-RuvA(4)-RuvB(12)-RuvC(2) complex forms which resolves the HJ.

The protein resides in the cytoplasm. The catalysed reaction is ATP + H2O = ADP + phosphate + H(+). In terms of biological role, the RuvA-RuvB-RuvC complex processes Holliday junction (HJ) DNA during genetic recombination and DNA repair, while the RuvA-RuvB complex plays an important role in the rescue of blocked DNA replication forks via replication fork reversal (RFR). RuvA specifically binds to HJ cruciform DNA, conferring on it an open structure. The RuvB hexamer acts as an ATP-dependent pump, pulling dsDNA into and through the RuvAB complex. RuvB forms 2 homohexamers on either side of HJ DNA bound by 1 or 2 RuvA tetramers; 4 subunits per hexamer contact DNA at a time. Coordinated motions by a converter formed by DNA-disengaged RuvB subunits stimulates ATP hydrolysis and nucleotide exchange. Immobilization of the converter enables RuvB to convert the ATP-contained energy into a lever motion, pulling 2 nucleotides of DNA out of the RuvA tetramer per ATP hydrolyzed, thus driving DNA branch migration. The RuvB motors rotate together with the DNA substrate, which together with the progressing nucleotide cycle form the mechanistic basis for DNA recombination by continuous HJ branch migration. Branch migration allows RuvC to scan DNA until it finds its consensus sequence, where it cleaves and resolves cruciform DNA. This is Holliday junction branch migration complex subunit RuvB from Halorhodospira halophila (strain DSM 244 / SL1) (Ectothiorhodospira halophila (strain DSM 244 / SL1)).